Consider the following 437-residue polypeptide: Glutamate-1-semialdehyde 2,1-aminomutase 1 (437 aa).

Lysine 268 is subject to N6-(pyridoxal phosphate)lysine.

This sequence belongs to the class-III pyridoxal-phosphate-dependent aminotransferase family. HemL subfamily. In terms of assembly, homodimer. Pyridoxal 5'-phosphate is required as a cofactor.

It is found in the cytoplasm. It carries out the reaction (S)-4-amino-5-oxopentanoate = 5-aminolevulinate. It functions in the pathway porphyrin-containing compound metabolism; protoporphyrin-IX biosynthesis; 5-aminolevulinate from L-glutamyl-tRNA(Glu): step 2/2. The chain is Glutamate-1-semialdehyde 2,1-aminomutase 1 from Halalkalibacterium halodurans (strain ATCC BAA-125 / DSM 18197 / FERM 7344 / JCM 9153 / C-125) (Bacillus halodurans).